The sequence spans 381 residues: MRSHTITMTTTSVSSWPYSSHRMRFITNHSDQPPQNFSATPNVTTCPMDEKLLSTVLTTSYSVIFIVGLVGNIIALYVFLGIHRKRNSIQIYLLNVAIADLLLIFCLPFRIMYHINQNKWTLGVILCKVVGTLFYMNMYISIILLGFISLDRYIKINRSIQQRKAITTKQSIYVCCIVWMLALGGFLTMIILTLKKGGHNSTMCFHYRDKHNAKGEAIFNFILVVMFWLIFLLIILSYIKIGKNLLRISKRRSKFPNSGKYATTARNSFIVLIIFTICFVPYHAFRFIYISSQLNVSSCYWKEIVHKTNEIMLVLSSFNSCLDPVMYFLMSSNIRKIMCQLLFRRFQGEPSRSESTSEFKPGYSLHDTSVAVKIQSSSKST.

Residues 1-61 (MRSHTITMTT…LLSTVLTTSY (61 aa)) are Extracellular-facing. N-linked (GlcNAc...) asparagine glycosylation is found at Asn-28, Asn-36, and Asn-42. The chain crosses the membrane as a helical span at residues 62–82 (SVIFIVGLVGNIIALYVFLGI). Residues 83-88 (HRKRNS) lie on the Cytoplasmic side of the membrane. Residues 89-109 (IQIYLLNVAIADLLLIFCLPF) form a helical membrane-spanning segment. Over 110 to 128 (RIMYHINQNKWTLGVILCK) the chain is Extracellular. Cys-127 and Cys-204 are oxidised to a cystine. The helical transmembrane segment at 129-149 (VVGTLFYMNMYISIILLGFIS) threads the bilayer. Over 150–171 (LDRYIKINRSIQQRKAITTKQS) the chain is Cytoplasmic. The chain crosses the membrane as a helical span at residues 172–192 (IYVCCIVWMLALGGFLTMIIL). Over 193–216 (TLKKGGHNSTMCFHYRDKHNAKGE) the chain is Extracellular. The N-linked (GlcNAc...) asparagine glycan is linked to Asn-200. The chain crosses the membrane as a helical span at residues 217–237 (AIFNFILVVMFWLIFLLIILS). The Cytoplasmic segment spans residues 238-269 (YIKIGKNLLRISKRRSKFPNSGKYATTARNSF). A helical membrane pass occupies residues 270 to 290 (IVLIIFTICFVPYHAFRFIYI). The Extracellular portion of the chain corresponds to 291–310 (SSQLNVSSCYWKEIVHKTNE). Asn-295 carries an N-linked (GlcNAc...) asparagine glycan. A helical transmembrane segment spans residues 311-331 (IMLVLSSFNSCLDPVMYFLMS). Residues 332 to 381 (SNIRKIMCQLLFRRFQGEPSRSESTSEFKPGYSLHDTSVAVKIQSSSKST) are Cytoplasmic-facing.

It belongs to the G-protein coupled receptor 1 family.

The protein localises to the cell membrane. Functionally, G-protein-coupled receptor of lysophosphatidylserine (LysoPS) that plays different roles in immune response. Acts a damage-sensing receptor that triggers tissue repair upon recognition of dying neutrophils. Mechanistically, apoptotic neutrophils release lysophosphatydilserine that are recognized by type 3 innate lymphoid cells (ILC3s) via GPR34, which activates downstream PI3K-AKT and RAS-ERK signaling pathways leading to STAT3 activation and IL-22 production. Plays an important role in microglial function, controlling morphology and phagocytosis. The sequence is that of Probable G-protein coupled receptor 34 (GPR34) from Gorilla gorilla gorilla (Western lowland gorilla).